We begin with the raw amino-acid sequence, 312 residues long: Phosphoribosylaminoimidazole-succinocarboxamide synthase (312 aa).

Belongs to the SAICAR synthetase family.

It catalyses the reaction 5-amino-1-(5-phospho-D-ribosyl)imidazole-4-carboxylate + L-aspartate + ATP = (2S)-2-[5-amino-1-(5-phospho-beta-D-ribosyl)imidazole-4-carboxamido]succinate + ADP + phosphate + 2 H(+). Its pathway is purine metabolism; IMP biosynthesis via de novo pathway; 5-amino-1-(5-phospho-D-ribosyl)imidazole-4-carboxamide from 5-amino-1-(5-phospho-D-ribosyl)imidazole-4-carboxylate: step 1/2. This chain is Phosphoribosylaminoimidazole-succinocarboxamide synthase, found in Legionella pneumophila (strain Paris).